The sequence spans 910 residues: MGVRGLQGFVGSTCPHICTVVNFKELAEHHRSKYPGCTPTIVVDAMCCLRYWYTPESWICGGQWREYFSALRDFVKTFTAAGIKLIFFFDGMVEQDKRDEWVKRRLKNNREISRIFHYIKSHKEQPGRNMFFIPSGLAVFTRFALKTLGQETLCSLQEADYEVASYGLQHNCLGILGEDTDYLIYDTCPYFSISELCLESLDTVMLCREKLCESLGLCVADLPLLACLLGNDIIPEGMFESFRYKCLSSYTSVKENFDKKGNIILAVSDHISKVLYLYQGEKKLEEILPLGPNKALFYKGMASYLLPGQKSPWFFQKPKGVITLDKQVISTSSDAESREEVPMCSDAESRQEVPMCTGPESRREVPVYTDSEPRQEVPMCSDPEPRQEVPTCTGPESRREVPMCSDPEPRQEVPMCTGPEARQEVPMYTDSEPRQEVPMYTDSEPRQEVPMYTGSEPRQEVPMYTGPESRQEVPMYTGPESRQEVLIRTDPESRQEIMCTGHESKQEVPICTDPISKQEDSMCTHAEINQKLPVATDFEFKLEALMCTNPEIKQEDPTNVGPEVKQQVTMVSDTEILKVARTHHVQAESYLVYNIMSSGEIECSNTLEDELDQALPSQAFIYRPIRQRVYSLLLEDCQDVTSTCLAVKEWFVYPGNPLRHPDLVRPLQMTIPGGTPSLKILWLNQEPEIQVRRLDTLLACFNLSSSREELQAVESPFQALCCLLIYLFVQVDTLCLEDLHAFIAQALCLQGKSTSQLVNLQPDYINPRAVQLGSLLVRGLTTLVLVNSACGFPWKTSDFMPWNVFDGKLFHQKYLQSEKGYAVEVLLEQNRSRLTKFHNLKAVVCKACMKENRRITGRAHWGSHHAGRWGRQGSSYHRTGSGYSRSSQGQPWRDQGPGSRQYEHDQWRRY.

3 disordered regions span residues 333–416 (SDAE…VPMC), 443–483 (SEPR…ESRQ), and 863–910 (SHHA…WRRY). 3 stretches are compositionally biased toward basic and acidic residues: residues 335–351 (AESR…ESRQ), 360–375 (ESRR…EPRQ), and 396–411 (ESRR…EPRQ). The segment covering 872-890 (QGSSYHRTGSGYSRSSQGQ) has biased composition (polar residues). Arg885 is modified (omega-N-methylarginine). The segment covering 901–910 (QYEHDQWRRY) has biased composition (basic and acidic residues).

Belongs to the constitutive coactivator of PPAR-gamma family. Interacts with ESR1 and RXRA. Interacts with PPARG; in a ligand-independent manner. Widely expressed.

Its subcellular location is the nucleus. Functions as a transactivator of PPARG and ESR1. Functions in adipogenesis through PPARG activation. The chain is Constitutive coactivator of peroxisome proliferator-activated receptor gamma (FAM120B) from Homo sapiens (Human).